The primary structure comprises 344 residues: Serine/arginine-rich splicing factor 6 (344 aa).

Residues 1-72 (MPRVYIGRLS…ERVIVEHARG (72 aa)) enclose the RRM 1 domain. A phosphoserine mark is found at Ser-45, Ser-81, and Ser-84. Residues 75–103 (RDRDGYSYGSRSGGGGYSSRRTSGRDKYG) form a disordered region. In terms of domain architecture, RRM 2 spans 110–183 (YRLIVENLSS…RNIRLIEDKP (74 aa)). N6-acetyllysine is present on Lys-165. Residues 176 to 344 (IRLIEDKPRT…RSRSRSSSRD (169 aa)) form a disordered region. A Glycyl lysine isopeptide (Lys-Gly) (interchain with G-Cter in SUMO2) cross-link involves residue Lys-182. A compositionally biased stretch (basic residues) spans 185–250 (TSHRRSYSGS…RKSRSKSKSK (66 aa)). 2 stretches are compositionally biased toward basic and acidic residues: residues 264–273 (RSKDEYEKSR) and 280–291 (SPKENGKGDIKS). Ser-297 and Ser-299 each carry phosphoserine. Ser-303 bears the Phosphoserine; by DYRK1A mark. 2 positions are modified to phosphoserine: Ser-314 and Ser-316. Positions 322 to 344 (ATSRSRSRSRSKSRSRSRSSSRD) are enriched in basic residues.

This sequence belongs to the splicing factor SR family. Binds SREK1/SFRS12. Interacts with DYRK1A. In terms of processing, extensively phosphorylated on serine residues in the RS domain. Phosphorylated by DYRK1A, probably in the RS domain. Phosphorylation by DYRK1A modulates alternative splice site selection and inhibits the expression of MAPT/Tau exon 10.

It localises to the nucleus. Its subcellular location is the nucleus speckle. Its function is as follows. Plays a role in constitutive splicing and modulates the selection of alternative splice sites. Plays a role in the alternative splicing of MAPT/Tau exon 10. Binds to alternative exons of TNC pre-mRNA and promotes the expression of alternatively spliced TNC. Plays a role in wound healing and in the regulation of keratinocyte differentiation and proliferation via its role in alternative splicing. This Homo sapiens (Human) protein is Serine/arginine-rich splicing factor 6 (SRSF6).